The following is a 155-amino-acid chain: Ribosomal RNA large subunit methyltransferase H (155 aa).

S-adenosyl-L-methionine is bound by residues leucine 72, glycine 103, and leucine 122 to leucine 127.

This sequence belongs to the RNA methyltransferase RlmH family. Homodimer.

It is found in the cytoplasm. The catalysed reaction is pseudouridine(1915) in 23S rRNA + S-adenosyl-L-methionine = N(3)-methylpseudouridine(1915) in 23S rRNA + S-adenosyl-L-homocysteine + H(+). Its function is as follows. Specifically methylates the pseudouridine at position 1915 (m3Psi1915) in 23S rRNA. The sequence is that of Ribosomal RNA large subunit methyltransferase H from Mannheimia succiniciproducens (strain KCTC 0769BP / MBEL55E).